A 376-amino-acid chain; its full sequence is Glutamate 5-kinase (376 aa).

Residue Lys15 coordinates ATP. The substrate site is built by Ser55, Asp141, and Asn153. ATP-binding positions include 173-174 (SD) and 215-221 (TGGMQTK). The PUA domain occupies 280–361 (AGRLTVDAGA…HAIAEVLDEA (82 aa)).

This sequence belongs to the glutamate 5-kinase family.

The protein localises to the cytoplasm. The enzyme catalyses L-glutamate + ATP = L-glutamyl 5-phosphate + ADP. Its pathway is amino-acid biosynthesis; L-proline biosynthesis; L-glutamate 5-semialdehyde from L-glutamate: step 1/2. Catalyzes the transfer of a phosphate group to glutamate to form L-glutamate 5-phosphate. In Salinibacter ruber (strain DSM 13855 / M31), this protein is Glutamate 5-kinase.